Reading from the N-terminus, the 275-residue chain is Translation initiation factor 2 subunit alpha (275 aa).

Residues 12-83 (GEFVVATVKR…RKGHIDLSLR (72 aa)) enclose the S1 motif domain.

It belongs to the eIF-2-alpha family. As to quaternary structure, heterotrimer composed of an alpha, a beta and a gamma chain.

In terms of biological role, eIF-2 functions in the early steps of protein synthesis by forming a ternary complex with GTP and initiator tRNA. The polypeptide is Translation initiation factor 2 subunit alpha (eif2a) (Pyrococcus abyssi (strain GE5 / Orsay)).